Consider the following 285-residue polypeptide: Energy-coupling factor transporter ATP-binding protein EcfA2 (285 aa).

An ABC transporter domain is found at 3–245 (INFEQVNFSY…DLVWFKTVAL (243 aa)). Position 40 to 47 (40 to 47 (GQTGSGKS)) interacts with ATP. Glu171 acts as the Proton acceptor in catalysis.

The protein belongs to the ABC transporter superfamily. Energy-coupling factor EcfA family. In terms of assembly, forms a stable energy-coupling factor (ECF) transporter complex probably composed of 2 membrane-embedded substrate-binding proteins (S component), 2 ATP-binding proteins (A component) and 2 transmembrane proteins (T component). This complex interacts with a number of substrate-specific components, including FolT, PanT and RibU for 5-formyltetrahydrofolate, pantothenate and riboflavin respectively.

The protein localises to the cell membrane. Functionally, ATP-binding (A) component of a common energy-coupling factor (ECF) ABC-transporter complex. Unlike classic ABC transporters this ECF transporter provides the energy necessary to transport a number of different substrates including 5-formyltetrahydrofolate, pantothenate and riboflavin. Expression of the complex plus FolT in E.coli allows 5-formyltetrahydrofolate uptake; 5-formyltetrahydrofolate is not taken up in the absence of FolT or the EcfA1A2T complex. This chain is Energy-coupling factor transporter ATP-binding protein EcfA2, found in Leuconostoc mesenteroides subsp. mesenteroides (strain ATCC 8293 / DSM 20343 / BCRC 11652 / CCM 1803 / JCM 6124 / NCDO 523 / NBRC 100496 / NCIMB 8023 / NCTC 12954 / NRRL B-1118 / 37Y).